Here is a 311-residue protein sequence, read N- to C-terminus: Tryptophan 2,3-dioxygenase (311 aa).

Positions 1–37 (MQPPGGDAPAGCPFSGARAAQPAQAAHEAPHVPGEAD) are disordered. The segment covering 17 to 27 (ARAAQPAQAAH) has biased composition (low complexity). Residues 80 to 84 (FIIQH), tyrosine 142, and arginine 146 contribute to the substrate site. Histidine 269 is a binding site for heme. Substrate is bound at residue threonine 283.

This sequence belongs to the tryptophan 2,3-dioxygenase family. In terms of assembly, homotetramer. Requires heme as cofactor.

It catalyses the reaction L-tryptophan + O2 = N-formyl-L-kynurenine. The protein operates within amino-acid degradation; L-tryptophan degradation via kynurenine pathway; L-kynurenine from L-tryptophan: step 1/2. Its function is as follows. Heme-dependent dioxygenase that catalyzes the oxidative cleavage of the L-tryptophan (L-Trp) pyrrole ring and converts L-tryptophan to N-formyl-L-kynurenine. Catalyzes the oxidative cleavage of the indole moiety. This chain is Tryptophan 2,3-dioxygenase, found in Burkholderia cenocepacia (strain ATCC BAA-245 / DSM 16553 / LMG 16656 / NCTC 13227 / J2315 / CF5610) (Burkholderia cepacia (strain J2315)).